The primary structure comprises 96 residues: Co-chaperonin GroES (96 aa).

It belongs to the GroES chaperonin family. In terms of assembly, heptamer of 7 subunits arranged in a ring. Interacts with the chaperonin GroEL.

It is found in the cytoplasm. Functionally, together with the chaperonin GroEL, plays an essential role in assisting protein folding. The GroEL-GroES system forms a nano-cage that allows encapsulation of the non-native substrate proteins and provides a physical environment optimized to promote and accelerate protein folding. GroES binds to the apical surface of the GroEL ring, thereby capping the opening of the GroEL channel. The protein is Co-chaperonin GroES of Shewanella frigidimarina (strain NCIMB 400).